A 163-amino-acid polypeptide reads, in one-letter code: MKVNGDVLKYGDNIDTDVIIPARYLNTSVPEELAKHCMEDLDVDFLKKLKTGDIVVGGRNFGCGSSREHAPICIKAAGVSCVIAKSFARIFYRNSINIGFPILECEEAVNDASTGDKLEVDFIEGIIKNVTLNKEYKAQPFPDFMLKIMKNEGLTNCVKKGLF.

Belongs to the LeuD family. LeuD type 2 subfamily. As to quaternary structure, heterodimer of LeuC and LeuD.

The enzyme catalyses (2R,3S)-3-isopropylmalate = (2S)-2-isopropylmalate. It participates in amino-acid biosynthesis; L-leucine biosynthesis; L-leucine from 3-methyl-2-oxobutanoate: step 2/4. Catalyzes the isomerization between 2-isopropylmalate and 3-isopropylmalate, via the formation of 2-isopropylmaleate. This chain is 3-isopropylmalate dehydratase small subunit (leuD), found in Clostridium acetobutylicum (strain ATCC 824 / DSM 792 / JCM 1419 / IAM 19013 / LMG 5710 / NBRC 13948 / NRRL B-527 / VKM B-1787 / 2291 / W).